The chain runs to 670 residues: DNA ligase (670 aa).

NAD(+) is bound by residues 32–36 (DSEYD), 81–82 (SL), and glutamate 114. The active-site N6-AMP-lysine intermediate is lysine 116. Residues arginine 137, glutamate 174, lysine 291, and lysine 315 each coordinate NAD(+). Zn(2+) contacts are provided by cysteine 409, cysteine 412, cysteine 427, and cysteine 433. Residues 592–670 (ASENLFKDKT…EEEFLAQITR (79 aa)) enclose the BRCT domain.

This sequence belongs to the NAD-dependent DNA ligase family. LigA subfamily. Mg(2+) is required as a cofactor. Mn(2+) serves as cofactor.

The catalysed reaction is NAD(+) + (deoxyribonucleotide)n-3'-hydroxyl + 5'-phospho-(deoxyribonucleotide)m = (deoxyribonucleotide)n+m + AMP + beta-nicotinamide D-nucleotide.. Its function is as follows. DNA ligase that catalyzes the formation of phosphodiester linkages between 5'-phosphoryl and 3'-hydroxyl groups in double-stranded DNA using NAD as a coenzyme and as the energy source for the reaction. It is essential for DNA replication and repair of damaged DNA. This is DNA ligase from Haemophilus influenzae (strain PittGG).